Consider the following 576-residue polypeptide: Zn(2)-C6 fungal-type transcription factor mpsE (576 aa).

The zn(2)-C6 fungal-type DNA-binding region spans 15 to 46; the sequence is CDRCRSHKLKCPQQPSTATGACQRCTRAKAQC. Residues 47–61 are compositionally biased toward polar residues; the sequence is TFSPRSRAIKNTQDG. Disordered regions lie at residues 47-123, 334-369, and 404-424; these read TFSP…GTFD, VAHA…SSTA, and HPAP…LHRR. Low complexity predominate over residues 95 to 109; the sequence is PPQQQQSDQQKPSGS.

It is found in the nucleus. Its function is as follows. Transcription factor; part of the gene cluster that mediates the biosynthesis of macrophasetins, 3-decalinoyltetramic acids (DTAs) which feature a tetramate (pyrrolidine-2,4-dione) unit connected to a decalin fragment and that have potent bioactivities. The chain is Zn(2)-C6 fungal-type transcription factor mpsE from Macrophomina phaseolina (strain MS6) (Charcoal rot fungus).